The sequence spans 201 residues: ADP-ribosylation factor-like protein 4D (201 aa).

Residue Gly-2 is the site of N-myristoyl glycine attachment. Residues 28–35 (GLDSAGKT), 76–80 (DVGGQ), and 135–138 (NKQD) each bind GTP.

This sequence belongs to the small GTPase superfamily. Arf family. In terms of assembly, interacts with CYTH2; the interaction is direct and ARL4D GTP-dependent. Does not interact with ARL4D.

The protein localises to the nucleus. It localises to the nucleolus. Its subcellular location is the cell membrane. The protein resides in the cytoplasm. Its function is as follows. Small GTP-binding protein which cycles between an inactive GDP-bound and an active GTP-bound form, and the rate of cycling is regulated by guanine nucleotide exchange factors (GEF) and GTPase-activating proteins (GAP). GTP-binding protein that does not act as an allosteric activator of the cholera toxin catalytic subunit. Recruits CYTH1, CYTH2, CYTH3 and CYTH4 to the plasma membrane in GDP-bound form. The chain is ADP-ribosylation factor-like protein 4D (ARL4D) from Homo sapiens (Human).